We begin with the raw amino-acid sequence, 294 residues long: ATP phosphoribosyltransferase (294 aa).

Belongs to the ATP phosphoribosyltransferase family. Long subfamily. Requires Mg(2+) as cofactor.

The protein resides in the cytoplasm. The enzyme catalyses 1-(5-phospho-beta-D-ribosyl)-ATP + diphosphate = 5-phospho-alpha-D-ribose 1-diphosphate + ATP. It participates in amino-acid biosynthesis; L-histidine biosynthesis; L-histidine from 5-phospho-alpha-D-ribose 1-diphosphate: step 1/9. Its activity is regulated as follows. Feedback inhibited by histidine. Functionally, catalyzes the condensation of ATP and 5-phosphoribose 1-diphosphate to form N'-(5'-phosphoribosyl)-ATP (PR-ATP). Has a crucial role in the pathway because the rate of histidine biosynthesis seems to be controlled primarily by regulation of HisG enzymatic activity. The chain is ATP phosphoribosyltransferase from Chlorobium phaeobacteroides (strain DSM 266 / SMG 266 / 2430).